The primary structure comprises 252 residues: Triosephosphate isomerase (252 aa).

10 to 12 contacts substrate; sequence NWK. Residue His96 is the Electrophile of the active site. The active-site Proton acceptor is the Glu168. Substrate-binding positions include Gly174, Ser214, and 235-236; that span reads GG.

It belongs to the triosephosphate isomerase family. In terms of assembly, homodimer.

Its subcellular location is the cytoplasm. It catalyses the reaction D-glyceraldehyde 3-phosphate = dihydroxyacetone phosphate. Its pathway is carbohydrate biosynthesis; gluconeogenesis. It functions in the pathway carbohydrate degradation; glycolysis; D-glyceraldehyde 3-phosphate from glycerone phosphate: step 1/1. In terms of biological role, involved in the gluconeogenesis. Catalyzes stereospecifically the conversion of dihydroxyacetone phosphate (DHAP) to D-glyceraldehyde-3-phosphate (G3P). This Streptococcus pyogenes serotype M2 (strain MGAS10270) protein is Triosephosphate isomerase.